A 1881-amino-acid chain; its full sequence is Ankyrin-1 (1881 aa).

Residues 1–827 (MPYSVGFREA…EDEGEELISF (827 aa)) are 89 kDa domain. 23 ANK repeats span residues 44–73 (NGLN…ILET), 77–106 (KGNT…NVNA), 110–139 (KGFT…NQNV), 143–172 (DGFT…KGKV), 174–201 (LPAL…NPDV), 205–234 (TGFT…SVNF), 238–267 (NGIT…QIET), 271–300 (DELT…PIQA), 304–333 (NGLS…EIDD), 337–366 (DHLT…KPNS), 370–399 (NGFT…SIDA), 403–432 (SGLT…SPNV), 436–465 (KVET…KVNA), 469–498 (DDQT…NPNL), 502–531 (AGHT…SQAC), 535–564 (KGFT…HPNA), 568–597 (NGLT…SPHS), 601–630 (NGYT…SANA), 634–663 (QGVT…NGNL), 667–696 (SGLT…MVDA), 700–729 (MGYT…DVNA), 733–762 (LGYS…SPNE), and 766–795 (DGTT…ETSF). Residue N105 is modified to (3S)-3-hydroxyasparagine; by HIF1AN; partial. N233 bears the (3S)-3-hydroxyasparagine; by HIF1AN; partial mark. Position 429 is a phosphoserine (S429). (3S)-3-hydroxyasparagine; by HIF1AN; partial is present on residues N431 and N464. Residues N629 and N662 each carry the (3S)-3-hydroxyasparagine; by HIF1AN; partial modification. D695 carries the post-translational modification (3S)-3-hydroxyaspartate; by HIF1AN; partial. Position 728 is a (3S)-3-hydroxyasparagine; by HIF1AN; partial (N728). S759 is subject to Phosphoserine. N761 bears the (3S)-3-hydroxyasparagine; by HIF1AN; partial mark. S781, S817, S834, and S856 each carry phosphoserine. Positions 875–904 (EEQEQASKEYDEDSLIPSSPATETSDNISP) are disordered. Polar residues predominate over residues 890-904 (IPSSPATETSDNISP). ZU5 domains follow at residues 913–1068 (FLVS…IMSR) and 1070–1216 (CQDY…LSDC). T961 carries the post-translational modification Phosphothreonine. Y1073 is modified (phosphotyrosine). Position 1082 is a phosphoserine (S1082). Positions 1234 to 1362 (TAVPYMAKFV…QHILCHLNIT (129 aa)) are UPA domain. Phosphothreonine is present on residues T1378 and T1380. A 55 kDa regulatory domain region spans residues 1383-1881 (ALRYSILSES…SKDHTSTPNP (499 aa)). Residues S1390, S1392, and S1396 each carry the phosphoserine modification. Position 1400 is a phosphothreonine (T1400). One can recognise a Death domain in the interval 1403–1487 (AEMKMAVISE…EIVNMLEGSG (85 aa)). Phosphoserine occurs at positions 1428 and 1486. A disordered region spans residues 1486–1510 (SGRQSRNLKPDRRHTDRDYSLSPSQ). A compositionally biased stretch (basic and acidic residues) spans 1493-1504 (LKPDRRHTDRDY). S1523 and S1533 each carry phosphoserine. The disordered stretch occupies residues 1583 to 1613 (SSLECSKAEDSDATGHEWKLEGALSEEPRGP). Positions 1588–1612 (SKAEDSDATGHEWKLEGALSEEPRG) are enriched in basic and acidic residues. At S1617 the chain carries Phosphoserine. Disordered stretches follow at residues 1637–1703 (LLEQ…LQDW), 1718–1791 (QGSW…EAKN), and 1840–1859 (ADAA…EDPS). Positions 1642 to 1658 (EGQRSEEKLPGSKRQDD) are enriched in basic and acidic residues. 5 positions are modified to phosphoserine: S1666, S1671, S1686, S1690, and S1696. Positions 1683–1694 (ITHSPTVSQVTE) are enriched in polar residues. Composition is skewed to polar residues over residues 1718-1739 (QGSW…STMT) and 1758-1771 (SEHT…AESS). Residues 1772–1781 (QADRDRRQQG) show a composition bias toward basic and acidic residues.

In terms of assembly, component of the ankyrin-1 complex in the erythrocyte, composed of ANK1, RHCE, RHAG, SLC4A1, EPB42, GYPA, GYPB and AQP1. Interacts with a number of integral membrane proteins and cytoskeletal proteins. Interacts (via N-terminus) with SPTB/spectrin (beta chain). Also interacts with TTN/titin. Isoform Mu17 interacts with OBSCN isoform 3/obscurin. Interacts with HIF1AN. Interacts (via ANK 1-5 repeats) with RHCE; this interaction mediates the primary membrane attachment site for ANK1. Interacts (via ANK 1-2 repeats) with AQP1 (via the N-terminal). Interacts (via ANK 1-13 repeats) with EPB42. Interacts directly with SLC4A1 (via the cytoplasmic domain); this interaction is mediated by the SLC4A1 Band 3-II and Band 3-III dimers. Regulated by phosphorylation. In terms of processing, palmitoylated. Post-translationally, hydroxylated by HIF1AN at several asparagine and 1 aspartate residue within ANK repeat region. Hydroxylation seems to increase the conformational stability of this region and may also modulate protein-protein interactions mediated by the ANK repeat region. (Microbial infection) Probably cleaved by P.falciparum SERA6; the cleavage probably causes the disruption of the actin cytoskeleton and the rupture of the erythrocyte cell membrane releasing the merozoites. Isoform Mu17, isoform Mu18, isoform Mu19 and isoform Mu20 are expressed in skeletal muscle. Isoform Br21 is expressed in brain.

It is found in the cytoplasm. The protein localises to the cytoskeleton. It localises to the membrane. The protein resides in the myofibril. Its subcellular location is the sarcomere. It is found in the m line. The protein localises to the sarcoplasmic reticulum. Functionally, component of the ankyrin-1 complex, a multiprotein complex involved in the stability and shape of the erythrocyte membrane. Attaches integral membrane proteins to cytoskeletal elements; binds to the erythrocyte membrane protein band 4.2, to Na-K ATPase, to the lymphocyte membrane protein GP85, and to the cytoskeletal proteins fodrin, tubulin, vimentin and desmin. Erythrocyte ankyrins also link spectrin (beta chain) to the cytoplasmic domain of the erythrocytes anion exchange protein; they retain most or all of these binding functions. Its function is as follows. Together with obscurin in skeletal muscle may provide a molecular link between the sarcoplasmic reticulum and myofibrils. This chain is Ankyrin-1, found in Homo sapiens (Human).